The sequence spans 102 residues: Small ribosomal subunit protein uS10 (102 aa).

Belongs to the universal ribosomal protein uS10 family. As to quaternary structure, part of the 30S ribosomal subunit.

Functionally, involved in the binding of tRNA to the ribosomes. The sequence is that of Small ribosomal subunit protein uS10 from Lactobacillus helveticus (strain DPC 4571).